Consider the following 476-residue polypeptide: Nitrosuccinate lyase (476 aa).

Fumarate-binding residues include R137, R140, and R201. Catalysis depends on S302, which acts as the Proton acceptor. Residues K308 and N310 each coordinate fumarate. The active-site Proton donor is the R341.

It belongs to the class-II fumarase/aspartase family. Homotetramer.

The catalysed reaction is 2-nitrobutanedioate = fumarate + nitrite + H(+). It functions in the pathway antibiotic biosynthesis. Functionally, part of a gene cluster involved in the biosynthesis of cremeomycin, a light-sensitive o-diazoquinone with antibacterial and antiproliferative effects. Catalyzes the formation of nitrous acid from nitrosuccinic acid (2-nitrobutanedioate) by elimination of its nitro group. This Streptomyces cremeus protein is Nitrosuccinate lyase.